The primary structure comprises 212 residues: Peptide methionine sulfoxide reductase MsrA (212 aa).

The active site involves Cys52.

This sequence belongs to the MsrA Met sulfoxide reductase family.

It carries out the reaction L-methionyl-[protein] + [thioredoxin]-disulfide + H2O = L-methionyl-(S)-S-oxide-[protein] + [thioredoxin]-dithiol. It catalyses the reaction [thioredoxin]-disulfide + L-methionine + H2O = L-methionine (S)-S-oxide + [thioredoxin]-dithiol. Has an important function as a repair enzyme for proteins that have been inactivated by oxidation. Catalyzes the reversible oxidation-reduction of methionine sulfoxide in proteins to methionine. This Salmonella newport (strain SL254) protein is Peptide methionine sulfoxide reductase MsrA.